Reading from the N-terminus, the 152-residue chain is UPF0225 protein YchJ (152 aa).

The protein belongs to the UPF0225 family.

This chain is UPF0225 protein YchJ, found in Escherichia coli O17:K52:H18 (strain UMN026 / ExPEC).